The sequence spans 424 residues: Enolase (424 aa).

Q163 contacts (2R)-2-phosphoglycerate. E205 serves as the catalytic Proton donor. Residues D242, E285, and D312 each coordinate Mg(2+). Residues K337, R366, S367, and K388 each contribute to the (2R)-2-phosphoglycerate site. Residue K337 is the Proton acceptor of the active site.

This sequence belongs to the enolase family. Mg(2+) is required as a cofactor.

Its subcellular location is the cytoplasm. It is found in the secreted. The protein localises to the cell surface. It catalyses the reaction (2R)-2-phosphoglycerate = phosphoenolpyruvate + H2O. Its pathway is carbohydrate degradation; glycolysis; pyruvate from D-glyceraldehyde 3-phosphate: step 4/5. Functionally, catalyzes the reversible conversion of 2-phosphoglycerate (2-PG) into phosphoenolpyruvate (PEP). It is essential for the degradation of carbohydrates via glycolysis. This is Enolase from Dinoroseobacter shibae (strain DSM 16493 / NCIMB 14021 / DFL 12).